Here is a 258-residue protein sequence, read N- to C-terminus: MSSLLTKTRMLNKILQKSGTEPVAFQDICTLLSEVLECNVYIISKKGKVLGYTFGKDFECEAMKKKVIEDKKFPEDYNKTLLEVNETLSNLPNEGRCVFQEIGKCKKVDKLSTIVPIIGSRERLGTLILARFGNPFTDEDLVIVEYSATIVGMEMLRAMQDEITEDTRKKAVVQLAIGTLSYSELEAVEHIFDELNGNEGLLVASKIADKVGITRSVIVNALRKFESAGVIESRSLGMKGTYIRILNEKLIDELKKIK.

The segment at 1–156 is GAF domain; the sequence is MSSLLTKTRM…SATIVGMEML (156 aa). Positions 204–223 form a DNA-binding region, H-T-H motif; that stretch reads ASKIADKVGITRSVIVNALR.

The protein belongs to the CodY family.

The protein resides in the cytoplasm. DNA-binding global transcriptional regulator which is involved in the adaptive response to starvation and acts by directly or indirectly controlling the expression of numerous genes in response to nutrient availability. During rapid exponential growth, CodY is highly active and represses genes whose products allow adaptation to nutrient depletion. The sequence is that of Global transcriptional regulator CodY from Clostridium beijerinckii (strain ATCC 51743 / NCIMB 8052) (Clostridium acetobutylicum).